We begin with the raw amino-acid sequence, 234 residues long: Ribonuclease 3 (234 aa).

One can recognise an RNase III domain in the interval 13–136 (YITLEKALGY…LMAGVYLEAG (124 aa)). E49 serves as a coordination point for Mg(2+). The active site involves D53. 2 residues coordinate Mg(2+): S122 and E125. E125 is an active-site residue. Residues 163–232 (DYKTALQELT…AYQALQKLKG (70 aa)) form the DRBM domain.

It belongs to the ribonuclease III family. In terms of assembly, homodimer. The cofactor is Mg(2+).

Its subcellular location is the cytoplasm. The catalysed reaction is Endonucleolytic cleavage to 5'-phosphomonoester.. In terms of biological role, digests double-stranded RNA. Involved in the processing of primary rRNA transcript to yield the immediate precursors to the large and small rRNAs (23S and 16S). Processes some mRNAs, and tRNAs when they are encoded in the rRNA operon. Processes pre-crRNA and tracrRNA of type II CRISPR loci if present in the organism. This Helicobacter acinonychis (strain Sheeba) protein is Ribonuclease 3.